We begin with the raw amino-acid sequence, 210 residues long: Cell division protein SepF (210 aa).

Residues 13–101 are disordered; it reads GLADGDEYDE…EPVDPGYRAP (89 aa). 2 stretches are compositionally biased toward basic and acidic residues: residues 22 to 70 and 83 to 93; these read EQPR…ERPE and VEPRRPARPEP.

This sequence belongs to the SepF family. As to quaternary structure, homodimer. Interacts with FtsZ.

The protein localises to the cytoplasm. In terms of biological role, cell division protein that is part of the divisome complex and is recruited early to the Z-ring. Probably stimulates Z-ring formation, perhaps through the cross-linking of FtsZ protofilaments. Its function overlaps with FtsA. This Micrococcus luteus (strain ATCC 4698 / DSM 20030 / JCM 1464 / CCM 169 / CCUG 5858 / IAM 1056 / NBRC 3333 / NCIMB 9278 / NCTC 2665 / VKM Ac-2230) (Micrococcus lysodeikticus) protein is Cell division protein SepF.